A 353-amino-acid polypeptide reads, in one-letter code: Guanine nucleotide-binding protein subunit alpha (353 aa).

The tract at residues 1–26 (MGCGMSVEEKEGKARNEEIENQLKRD) is disordered. Residue glycine 2 is the site of N-myristoyl glycine attachment. Residue cysteine 3 is the site of S-palmitoyl cysteine attachment. Positions 7-26 (VEEKEGKARNEEIENQLKRD) are enriched in basic and acidic residues. The G-alpha domain occupies 32 to 353 (NEIKMLLLGA…QENLRLCGLI (322 aa)). A G1 motif region spans residues 35 to 48 (KMLLLGAGESGKST). Residues glutamate 43, serine 44, glycine 45, lysine 46, serine 47, threonine 48, aspartate 150, leucine 175, threonine 181, glycine 203, asparagine 269, lysine 270, aspartate 272, and alanine 325 each coordinate GTP. Serine 47 contacts Mg(2+). A G2 motif region spans residues 173-181 (DVLRSRVKT). Position 181 (threonine 181) interacts with Mg(2+). The G3 motif stretch occupies residues 196–205 (YRMFDVGGQR). The segment at 265–272 (ILFLNKID) is G4 motif. The tract at residues 323–328 (TCATDT) is G5 motif.

The protein belongs to the G-alpha family. G(q) subfamily. In terms of assembly, g proteins are composed of 3 units; alpha, beta and gamma. The alpha chain contains the guanine nucleotide binding site. The cofactor is Mg(2+).

Its function is as follows. Guanine nucleotide-binding proteins (G proteins) are involved as modulators or transducers in various transmembrane signaling systems. In Sporothrix schenckii (strain ATCC 58251 / de Perez 2211183) (Rose-picker's disease fungus), this protein is Guanine nucleotide-binding protein subunit alpha (SSG-1).